Reading from the N-terminus, the 410-residue chain is 26S proteasome non-ATPase regulatory subunit 6 (410 aa).

One can recognise a PCI domain in the interval 207 to 382; it reads DFAGAADLFL…GVIEVNHRDS (176 aa).

The protein belongs to the proteasome subunit S10 family. Expressed in multiple tissues including the intestine, pharynx and hypodermis.

Acts as a regulatory subunit of the 26S proteasome which is involved in the ATP-dependent degradation of ubiquitinated proteins. The polypeptide is 26S proteasome non-ATPase regulatory subunit 6 (rpn-7) (Caenorhabditis elegans).